The primary structure comprises 744 residues: 1,4-alpha-glucan branching enzyme GlgB (744 aa).

The active-site Nucleophile is aspartate 415. Glutamate 468 functions as the Proton donor in the catalytic mechanism.

The protein belongs to the glycosyl hydrolase 13 family. GlgB subfamily. In terms of assembly, monomer.

The catalysed reaction is Transfers a segment of a (1-&gt;4)-alpha-D-glucan chain to a primary hydroxy group in a similar glucan chain.. It functions in the pathway glycan biosynthesis; glycogen biosynthesis. Catalyzes the formation of the alpha-1,6-glucosidic linkages in glycogen by scission of a 1,4-alpha-linked oligosaccharide from growing alpha-1,4-glucan chains and the subsequent attachment of the oligosaccharide to the alpha-1,6 position. This Shewanella frigidimarina (strain NCIMB 400) protein is 1,4-alpha-glucan branching enzyme GlgB.